The sequence spans 439 residues: Cell division protein DivIB (439 aa).

Disordered regions lie at residues 1–96 (MDDK…DSNI) and 119–149 (DNEQPQSAPKEQNSDSIDEETVTKKERKSKV). At 1-173 (MDDKTKNDQQ…RRKRQKRIQY (173 aa)) the chain is on the cytoplasmic side. The segment covering 11 to 20 (ESNEDKDELE) has biased composition (acidic residues). The span at 26–38 (TSKKRRQRKRSKA) shows a compositional bias: basic residues. Over residues 64–76 (KDFKKEESNDKNN) the composition is skewed to basic and acidic residues. A compositionally biased stretch (low complexity) spans 77–86 (DSASSHANDN). Residues 87 to 96 (NIDDSTDSNI) are compositionally biased toward acidic residues. Residues 119-133 (DNEQPQSAPKEQNSD) show a composition bias toward polar residues. Residues 174–194 (SVITILVLLIAVILIYMFSPL) traverse the membrane as a helical segment. Positions 195–263 (SKIAHVNING…NTLNVDITEN (69 aa)) constitute a POTRA domain. The Extracellular segment spans residues 195–439 (SKIAHVNING…KINKQSSKNN (245 aa)). The disordered stretch occupies residues 396–439 (YRGNTSSQSESDKNVTKSSQEENQAKEELQSVLNKINKQSSKNN). The span at 405 to 424 (ESDKNVTKSSQEENQAKEEL) shows a compositional bias: basic and acidic residues. The span at 426–439 (SVLNKINKQSSKNN) shows a compositional bias: polar residues.

This sequence belongs to the FtsQ/DivIB family. DivIB subfamily.

The protein localises to the cell membrane. In terms of biological role, cell division protein that may be involved in stabilizing or promoting the assembly of the division complex. This chain is Cell division protein DivIB, found in Staphylococcus aureus (strain NCTC 8325 / PS 47).